The sequence spans 183 residues: uncharacterized protein (183 aa).

The helical transmembrane segment at 153–175 (LLYVFIRLFAGCLKVFRLCILWL) threads the bilayer.

The protein localises to the membrane. This is an uncharacterized protein from Saccharomyces cerevisiae (strain ATCC 204508 / S288c) (Baker's yeast).